We begin with the raw amino-acid sequence, 328 residues long: UPF0421 protein SAV1889 (328 aa).

Helical transmembrane passes span 19 to 39 (IAIFLTAVFCMALDLTPIYAI), 61 to 81 (LPATVIGAGFAVLFTYLFGDQ), 108 to 128 (VAVLTSLAMIPGIHDAYIFNF), and 132 to 152 (TLTAIIGLVTSGLINFMVFPP).

Belongs to the UPF0421 family.

It localises to the cell membrane. This chain is UPF0421 protein SAV1889, found in Staphylococcus aureus (strain Mu50 / ATCC 700699).